A 230-amino-acid polypeptide reads, in one-letter code: UPF0173 metal-dependent hydrolase SPO2976 (230 aa).

This sequence belongs to the UPF0173 family.

This is UPF0173 metal-dependent hydrolase SPO2976 from Ruegeria pomeroyi (strain ATCC 700808 / DSM 15171 / DSS-3) (Silicibacter pomeroyi).